The chain runs to 550 residues: Aldehyde dehydrogenase family 3 member I1, chloroplastic (550 aa).

The transit peptide at 1–59 (MTKLLEINHIQTLCFAKGFSPARLNVATSPFRISRRGGGGYCSNACIPYRLKFTCYATL) directs the protein to the chloroplast. An NAD(+)-binding site is contributed by 259-264 (GGARVA). Glu281 acts as the Proton acceptor in catalysis. Residue Cys316 is the Nucleophile of the active site.

The protein belongs to the aldehyde dehydrogenase family. In terms of assembly, homodimer and homomultimer.

The protein resides in the plastid. Its subcellular location is the chloroplast. The enzyme catalyses an aldehyde + NAD(+) + H2O = a carboxylate + NADH + 2 H(+). Its activity is regulated as follows. Thiol-based regulation. Inactivation after dimerization under oxidizing conditions. Functionally, involved in oxidative stress tolerance by detoxifying reactive aldehydes derived from lipid peroxidation. Medium- to long-chain saturated aldehydes are preferred substrates, while the short-chain aldehyde propanal is a weak substrate. Can use both NAD(+) and NADP(+), but the coenzyme preference is substrate dependent. This chain is Aldehyde dehydrogenase family 3 member I1, chloroplastic (ALDH3I1), found in Arabidopsis thaliana (Mouse-ear cress).